A 224-amino-acid chain; its full sequence is ATP synthase subunit a (224 aa).

The next 6 helical transmembrane spans lie at 17–37, 72–92, 99–119, 125–145, 170–190, and 195–215; these read LSLN…IYWL, IFIS…FPYI, LTLT…YGWI, MFAH…MVCI, LLLT…VTFL, and IALL…FAVL.

Belongs to the ATPase A chain family. In terms of assembly, F-type ATPases have 2 components, CF(1) - the catalytic core - and CF(0) - the membrane proton channel. CF(1) has five subunits: alpha(3), beta(3), gamma(1), delta(1), epsilon(1). CF(0) has three main subunits: a, b and c.

The protein localises to the mitochondrion inner membrane. Mitochondrial membrane ATP synthase (F(1)F(0) ATP synthase or Complex V) produces ATP from ADP in the presence of a proton gradient across the membrane which is generated by electron transport complexes of the respiratory chain. F-type ATPases consist of two structural domains, F(1) - containing the extramembraneous catalytic core and F(0) - containing the membrane proton channel, linked together by a central stalk and a peripheral stalk. During catalysis, ATP synthesis in the catalytic domain of F(1) is coupled via a rotary mechanism of the central stalk subunits to proton translocation. Key component of the proton channel; it may play a direct role in the translocation of protons across the membrane. The sequence is that of ATP synthase subunit a (mt:ATPase6) from Drosophila mauritiana (Fruit fly).